Consider the following 416-residue polypeptide: Photosystem II stability/assembly factor HCF136, chloroplastic (416 aa).

A chloroplast-targeting transit peptide spans Met1–Thr36. A thylakoid-targeting transit peptide spans Gly37–Ala67.

The protein belongs to the Ycf48 family.

It is found in the plastid. Its subcellular location is the chloroplast thylakoid lumen. In terms of biological role, essential for photosystem II (PSII) biogenesis; required for assembly of an early intermediate in PSII assembly that includes D2 (psbD) and cytochrome b559. In Oryza sativa subsp. japonica (Rice), this protein is Photosystem II stability/assembly factor HCF136, chloroplastic (HCF136).